The sequence spans 373 residues: 3 beta-hydroxysteroid dehydrogenase/Delta 5--&gt;4-isomerase type 4 (373 aa).

The active-site Proton acceptor is Tyr-155. Residue Lys-159 coordinates NAD(+). The chain crosses the membrane as a helical span at residues 288–308 (LPLLYWLAFLLEIVSFFLHPV). The residue at position 350 (Lys-350) is an N6-acetyllysine.

The protein belongs to the 3-beta-HSD family. Skin, placenta, also detectable in ovary and adrenal gland.

The protein localises to the endoplasmic reticulum membrane. It is found in the mitochondrion membrane. It carries out the reaction a 3beta-hydroxy-Delta(5)-steroid + NAD(+) = a 3-oxo-Delta(5)-steroid + NADH + H(+). The catalysed reaction is a 3-oxo-Delta(5)-steroid = a 3-oxo-Delta(4)-steroid. It functions in the pathway lipid metabolism; steroid biosynthesis. In terms of biological role, 3-beta-HSD is a bifunctional enzyme, that catalyzes the oxidative conversion of Delta(5)-ene-3-beta-hydroxy steroid, and the oxidative conversion of ketosteroids. The 3-beta-HSD enzymatic system plays a crucial role in the biosynthesis of all classes of hormonal steroids. The sequence is that of 3 beta-hydroxysteroid dehydrogenase/Delta 5--&gt;4-isomerase type 4 (Hsd3b6) from Rattus norvegicus (Rat).